Consider the following 133-residue polypeptide: Small ribosomal subunit protein uS8 (133 aa).

Belongs to the universal ribosomal protein uS8 family. In terms of assembly, part of the 30S ribosomal subunit. Contacts proteins S5 and S12.

Its function is as follows. One of the primary rRNA binding proteins, it binds directly to 16S rRNA central domain where it helps coordinate assembly of the platform of the 30S subunit. This chain is Small ribosomal subunit protein uS8, found in Thermosynechococcus vestitus (strain NIES-2133 / IAM M-273 / BP-1).